Consider the following 156-residue polypeptide: C-type lectin lectoxin-Lei1 (156 aa).

The signal sequence occupies residues 1-23; the sequence is MRRFLFLSLGVLVVAFSLNGIGA. 3 cysteine pairs are disulfide-bonded: cysteine 27–cysteine 38, cysteine 55–cysteine 154, and cysteine 129–cysteine 146. Residues 34-155 form the C-type lectin domain; sequence FDRFCYKVIK…CESRNIFICK (122 aa). 2 N-linked (GlcNAc...) asparagine glycosylation sites follow: asparagine 60 and asparagine 99. A Sugar-binding motif is present at residues 119–121; sequence KRN. Asparagine 142 serves as a coordination point for Ca(2+).

It belongs to the true venom lectin family. Expressed by the venom gland.

The protein resides in the secreted. Its function is as follows. Lectin which recognizes specific carbohydrate structures and agglutinates a variety of animal cells by binding to cell-surface glycoproteins and glycolipids. May be a calcium-dependent lectin. This chain is C-type lectin lectoxin-Lei1, found in Leioheterodon madagascariensis (Malagasy giant hognose snake).